Here is a 445-residue protein sequence, read N- to C-terminus: Tubulin beta-2 chain (445 aa).

An MREI motif motif is present at residues 1–4; the sequence is MREI. GTP contacts are provided by Gln-11, Glu-69, Ser-138, Gly-142, Thr-143, Gly-144, Asn-204, and Asn-226. Residue Glu-69 coordinates Mg(2+). Residues 424–445 form a disordered region; sequence QYQDATADEQGEFEEEGEEDEA. Over residues 429–445 the composition is skewed to acidic residues; sequence TADEQGEFEEEGEEDEA. Glu-438 is modified (5-glutamyl polyglutamate).

The protein belongs to the tubulin family. Dimer of alpha and beta chains. A typical microtubule is a hollow water-filled tube with an outer diameter of 25 nm and an inner diameter of 15 nM. Alpha-beta heterodimers associate head-to-tail to form protofilaments running lengthwise along the microtubule wall with the beta-tubulin subunit facing the microtubule plus end conferring a structural polarity. Microtubules usually have 13 protofilaments but different protofilament numbers can be found in some organisms and specialized cells. It depends on Mg(2+) as a cofactor. In terms of processing, some glutamate residues at the C-terminus are polyglycylated, resulting in polyglycine chains on the gamma-carboxyl group. Glycylation is mainly limited to tubulin incorporated into axonemes (cilia and flagella) whereas glutamylation is prevalent in neuronal cells, centrioles, axonemes, and the mitotic spindle. Both modifications can coexist on the same protein on adjacent residues, and lowering polyglycylation levels increases polyglutamylation, and reciprocally. The precise function of polyglycylation is still unclear. Post-translationally, some glutamate residues at the C-terminus are polyglutamylated, resulting in polyglutamate chains on the gamma-carboxyl group. Polyglutamylation plays a key role in microtubule severing by spastin (SPAST). SPAST preferentially recognizes and acts on microtubules decorated with short polyglutamate tails: severing activity by SPAST increases as the number of glutamates per tubulin rises from one to eight, but decreases beyond this glutamylation threshold. In terms of tissue distribution, highly expressed in neuronal cells.

The protein resides in the cytoplasm. Its subcellular location is the cytoskeleton. Functionally, tubulin is the major constituent of microtubules, a cylinder consisting of laterally associated linear protofilaments composed of alpha- and beta-tubulin heterodimers. Microtubules grow by the addition of GTP-tubulin dimers to the microtubule end, where a stabilizing cap forms. Below the cap, tubulin dimers are in GDP-bound state, owing to GTPase activity of alpha-tubulin. This Gallus gallus (Chicken) protein is Tubulin beta-2 chain.